Consider the following 107-residue polypeptide: MVKFAHVVAFLLLASLFQPLTARDLEINVLQLDVSQSGCPGVTKERWPELLGTPAKFAMQIIQKENPKLTNVQTVLNGTPVTEDLRCNRVRLFVNVLDFVVQTPQVG.

An N-terminal signal peptide occupies residues 1 to 22; sequence MVKFAHVVAFLLLASLFQPLTA. Positions 23–39 are excised as a propeptide; it reads RDLEINVLQLDVSQSGC.

It belongs to the protease inhibitor I13 (potato type I serine protease inhibitor) family.

It localises to the secreted. The chain is Proteinase inhibitor I-B (TIMPA) from Nicotiana tabacum (Common tobacco).